The primary structure comprises 134 residues: Translation initiation factor 2 subunit beta (134 aa).

Belongs to the eIF-2-beta/eIF-5 family. Heterotrimer composed of an alpha, a beta and a gamma chain.

EIF-2 functions in the early steps of protein synthesis by forming a ternary complex with GTP and initiator tRNA. The polypeptide is Translation initiation factor 2 subunit beta (Pyrobaculum arsenaticum (strain DSM 13514 / JCM 11321 / PZ6)).